The primary structure comprises 248 residues: MSVTMREMLEAGVHFGHQTRFWNPKMAPYIFGHRNRIHIVNLEKTLGMYQEAMKYIKQLSSNRGTVLFVGTKRQARETIAAEAARAGMPYVDQRWLGGMLTNFKTIKTSIKRLKELEALVEDGSMEKLSKKEALMFEREKIKLEKSIGGIKDMGGIPDAIFVVDVGYHKGAITEAAKLGIPVIGVVDTNHSPEGVAYIIPGNDDSSKAIMLYARGVADAILEGRASATNDLVESIKGGDDFVEVNEQA.

Belongs to the universal ribosomal protein uS2 family.

In Herminiimonas arsenicoxydans, this protein is Small ribosomal subunit protein uS2.